Reading from the N-terminus, the 147-residue chain is Ponticulin-like protein C4 (147 aa).

The first 20 residues, 1 to 20 (MKFTKSLLLLIVAVFASSNA), serve as a signal peptide directing secretion. A lipid anchor (GPI-like-anchor amidated asparagine) is attached at asparagine 118. An N-linked (GlcNAc...) asparagine glycan is attached at asparagine 118. A propeptide spans 119 to 147 (SSESDSSDSTRIGASFALAAAALLSMIAL) (removed in mature form).

This sequence belongs to the ponticulin family. In terms of processing, the GPI-like-anchor contains a phosphoceramide group, rather than a phosphatidyl group.

The protein resides in the cell membrane. In Dictyostelium discoideum (Social amoeba), this protein is Ponticulin-like protein C4 (ponC4).